Consider the following 152-residue polypeptide: ALK and LTK ligand 1 (152 aa).

An N-terminal signal peptide occupies residues 1–23; the sequence is MRAEKRWHILLSMILLLITSSQC. 2 disulfide bridges follow: Cys113-Cys149 and Cys127-Cys136.

The protein belongs to the ALKAL family. As to expression, expressed at low level in the notochord and iridophore stripes, the eye and the swim bladder.

Its subcellular location is the secreted. The protein resides in the cell membrane. In terms of biological role, cytokine that acts as a physiological ligand for receptor tyrosine kinases LTK and ALK. Required for iridophore development in the adult eye by acting as a receptor for LTK. The polypeptide is ALK and LTK ligand 1 (Danio rerio (Zebrafish)).